A 1372-amino-acid polypeptide reads, in one-letter code: DNA-directed RNA polymerase subunit beta' (1372 aa).

Zn(2+) is bound by residues Cys69, Cys71, Cys84, and Cys87. Residues Asp460, Asp462, and Asp464 each contribute to the Mg(2+) site. Zn(2+) is bound by residues Cys808, Cys882, Cys889, and Cys892.

Belongs to the RNA polymerase beta' chain family. The RNAP catalytic core consists of 2 alpha, 1 beta, 1 beta' and 1 omega subunit. When a sigma factor is associated with the core the holoenzyme is formed, which can initiate transcription. The cofactor is Mg(2+). It depends on Zn(2+) as a cofactor.

It carries out the reaction RNA(n) + a ribonucleoside 5'-triphosphate = RNA(n+1) + diphosphate. In terms of biological role, DNA-dependent RNA polymerase catalyzes the transcription of DNA into RNA using the four ribonucleoside triphosphates as substrates. The protein is DNA-directed RNA polymerase subunit beta' of Rickettsia bellii (strain OSU 85-389).